Here is a 212-residue protein sequence, read N- to C-terminus: Pyridoxine/pyridoxamine 5'-phosphate oxidase (212 aa).

Residues 8-11 and lysine 66 contribute to the substrate site; that span reads RTNY. Residues 61-66, 76-77, lysine 83, and glutamine 105 each bind FMN; these read RIVLLK and FT. Positions 123, 127, and 131 each coordinate substrate. FMN contacts are provided by residues 140–141 and tryptophan 185; that span reads QS. Position 191–193 (191–193) interacts with substrate; the sequence is RLH. Residue arginine 195 coordinates FMN.

It belongs to the pyridoxamine 5'-phosphate oxidase family. In terms of assembly, homodimer. It depends on FMN as a cofactor.

It carries out the reaction pyridoxamine 5'-phosphate + O2 + H2O = pyridoxal 5'-phosphate + H2O2 + NH4(+). It catalyses the reaction pyridoxine 5'-phosphate + O2 = pyridoxal 5'-phosphate + H2O2. It functions in the pathway cofactor metabolism; pyridoxal 5'-phosphate salvage; pyridoxal 5'-phosphate from pyridoxamine 5'-phosphate: step 1/1. The protein operates within cofactor metabolism; pyridoxal 5'-phosphate salvage; pyridoxal 5'-phosphate from pyridoxine 5'-phosphate: step 1/1. Its function is as follows. Catalyzes the oxidation of either pyridoxine 5'-phosphate (PNP) or pyridoxamine 5'-phosphate (PMP) into pyridoxal 5'-phosphate (PLP). In Leptospira biflexa serovar Patoc (strain Patoc 1 / Ames), this protein is Pyridoxine/pyridoxamine 5'-phosphate oxidase.